A 292-amino-acid chain; its full sequence is Inhibitory synaptic factor 1 (292 aa).

Disordered stretches follow at residues 1–25 (MNIR…RERI), 122–186 (SDSV…ERVR), and 198–292 (CDDE…KGKN). A coiled-coil region spans residues 23 to 63 (ERIRQRMKMVIGQLEDILRELKEVAKELREVVSQIDKLTSD). A compositionally biased stretch (acidic residues) spans 198–214 (CDDEEGDGEEEAAEEEG). A compositionally biased stretch (polar residues) spans 263–285 (RNSSTQTVSDKSTQTVLPYTATR).

This sequence belongs to the INSYN1 family. As to quaternary structure, interacts with GPHN.

Its subcellular location is the postsynaptic density. In terms of biological role, component of the protein machinery at the inhibitory synapses, probably acting as a scaffold. Inhibitory synapses dampen neuronal activity through postsynaptic hyperpolarization. This synaptic inhibition is fundamental for the functioning of the central nervous system, shaping and orchestrating the flow of information through neuronal networks to generate a precise neural code. The protein is Inhibitory synaptic factor 1 of Bos taurus (Bovine).